A 269-amino-acid polypeptide reads, in one-letter code: 4-hydroxy-tetrahydrodipicolinate reductase (269 aa).

Residues 13-18 (GASGRM) and aspartate 39 contribute to the NAD(+) site. Arginine 40 lines the NADP(+) pocket. Residues 101–103 (GTT) and 125–128 (APNM) each bind NAD(+). Histidine 158 (proton donor/acceptor) is an active-site residue. Histidine 159 serves as a coordination point for (S)-2,3,4,5-tetrahydrodipicolinate. Lysine 162 serves as the catalytic Proton donor. 168 to 169 (GT) provides a ligand contact to (S)-2,3,4,5-tetrahydrodipicolinate.

The protein belongs to the DapB family.

Its subcellular location is the cytoplasm. It catalyses the reaction (S)-2,3,4,5-tetrahydrodipicolinate + NAD(+) + H2O = (2S,4S)-4-hydroxy-2,3,4,5-tetrahydrodipicolinate + NADH + H(+). The enzyme catalyses (S)-2,3,4,5-tetrahydrodipicolinate + NADP(+) + H2O = (2S,4S)-4-hydroxy-2,3,4,5-tetrahydrodipicolinate + NADPH + H(+). The protein operates within amino-acid biosynthesis; L-lysine biosynthesis via DAP pathway; (S)-tetrahydrodipicolinate from L-aspartate: step 4/4. In terms of biological role, catalyzes the conversion of 4-hydroxy-tetrahydrodipicolinate (HTPA) to tetrahydrodipicolinate. The protein is 4-hydroxy-tetrahydrodipicolinate reductase of Bordetella pertussis (strain Tohama I / ATCC BAA-589 / NCTC 13251).